The primary structure comprises 73 residues: Exodeoxyribonuclease 7 small subunit (73 aa).

The protein belongs to the XseB family. Heterooligomer composed of large and small subunits.

Its subcellular location is the cytoplasm. The enzyme catalyses Exonucleolytic cleavage in either 5'- to 3'- or 3'- to 5'-direction to yield nucleoside 5'-phosphates.. Functionally, bidirectionally degrades single-stranded DNA into large acid-insoluble oligonucleotides, which are then degraded further into small acid-soluble oligonucleotides. The sequence is that of Exodeoxyribonuclease 7 small subunit from Streptococcus mutans serotype c (strain ATCC 700610 / UA159).